A 392-amino-acid chain; its full sequence is MYKRSLIAASLSVAALVSAQAMADINGGGATLPQQLYQEPGVLTAGFAAYIGVGSGNGKAAFLNNDYTKFVAGTTNKNVHWAGSDSKLSKTNETNPYLSAHGSAWGPLIQVPSVATSVALPFNKSGSNAVNFADVNTLCGVFSGRLTDWSQIPGSGRSGAITVVYRSESSGTTELFTRFLNASCSSTLEGGTFAITTSFGSSFSGGLPAGAVSAQGSQAVMNALNAAQGRITYMSPDFAAPTLAGLDDATKVAQVRGVSPAPANVSAAIGAVTPPTTAQRSDPNNWVPVFAATANPNDPSVRPYPTSGYPILGFTNLIFSQCYANATQTQQVRDFFTRHYGATANNDTAITNHRFVPLPASWKLAVRQSFLTSTNNLYIGHSNVCNGIGRPL.

Positions 1–23 (MYKRSLIAASLSVAALVSAQAMA) are cleaved as a signal peptide.

It belongs to the PstS family. Homodimer.

It is found in the secreted. Its subcellular location is the periplasm. It catalyses the reaction a phosphate monoester + H2O = an alcohol + phosphate. Its function is as follows. Has both a phosphomonoesterase and phosphodiesterase activity. In Pseudomonas aeruginosa (strain UCBPP-PA14), this protein is Alkaline phosphatase L.